A 472-amino-acid polypeptide reads, in one-letter code: Gamma-glutamylputrescine synthetase PuuA (472 aa).

The GS beta-grasp domain occupies 35 to 129; that stretch reads PNTQYVDVLL…MLLTMVDEDG (95 aa). A GS catalytic domain is found at 136 to 472; that stretch reads PRNVLNRLWQ…TEIEWMLKNA (337 aa).

Belongs to the glutamine synthetase family. As to quaternary structure, dodecamer. Mg(2+) is required as a cofactor. Mn(2+) serves as cofactor.

The catalysed reaction is putrescine + L-glutamate + ATP = gamma-L-glutamylputrescine + ADP + phosphate + H(+). It participates in amine and polyamine degradation; putrescine degradation; 4-aminobutanoate from putrescine: step 1/4. Functionally, involved in the breakdown of putrescine. Catalyzes the ATP-dependent gamma-glutamylation of putrescine, producing gamma-L-glutamylputrescine. Absolutely essential to utilize putrescine as both nitrogen and carbon sources and to decrease the toxicity of putrescine, which can lead to inhibition of cell growth and protein synthesis. In vitro is also able to use several diamines, and spermidine and spermine, instead of putrescine, but with a much lower activity, and cannot catalyze the gamma-glutamylation of ornithine or GABA. This Escherichia coli (strain K12) protein is Gamma-glutamylputrescine synthetase PuuA.